The chain runs to 63 residues: Small ribosomal subunit protein eS31 (63 aa).

Residues C34, C37, C53, and C56 each coordinate Zn(2+). The C4-type zinc finger occupies 34–56 (CPKCGSVMAFHREPVPRWHCGKC).

The protein belongs to the eukaryotic ribosomal protein eS31 family. As to quaternary structure, part of the 30S ribosomal subunit. Requires Zn(2+) as cofactor.

The polypeptide is Small ribosomal subunit protein eS31 (Pyrobaculum neutrophilum (strain DSM 2338 / JCM 9278 / NBRC 100436 / V24Sta) (Thermoproteus neutrophilus)).